A 237-amino-acid polypeptide reads, in one-letter code: Urease subunit alpha (237 aa).

A urease gamma region spans residues 1-102; sequence MKLTPKELDK…LVTIHTPVED (102 aa). The segment at 103–237 is urease beta; sequence NGKLAPGEVF…CGCEATKDKQ (135 aa).

This sequence in the N-terminal section; belongs to the urease gamma subunit family. The protein in the C-terminal section; belongs to the urease beta subunit family. As to quaternary structure, heterohexamer of 3 UreA (alpha) and 3 UreB (beta) subunits.

The protein resides in the cytoplasm. It carries out the reaction urea + 2 H2O + H(+) = hydrogencarbonate + 2 NH4(+). Its pathway is nitrogen metabolism; urea degradation; CO(2) and NH(3) from urea (urease route): step 1/1. This is Urease subunit alpha from Helicobacter felis.